The following is a 629-amino-acid chain: 1-deoxy-D-xylulose-5-phosphate synthase (629 aa).

Residues His72 and 113-115 (GHA) contribute to the thiamine diphosphate site. Asp144 lines the Mg(2+) pocket. Residues 145 to 146 (GA), Asn174, Tyr287, and Glu370 each bind thiamine diphosphate. Position 174 (Asn174) interacts with Mg(2+).

It belongs to the transketolase family. DXPS subfamily. Homodimer. It depends on Mg(2+) as a cofactor. Requires thiamine diphosphate as cofactor.

The enzyme catalyses D-glyceraldehyde 3-phosphate + pyruvate + H(+) = 1-deoxy-D-xylulose 5-phosphate + CO2. It functions in the pathway metabolic intermediate biosynthesis; 1-deoxy-D-xylulose 5-phosphate biosynthesis; 1-deoxy-D-xylulose 5-phosphate from D-glyceraldehyde 3-phosphate and pyruvate: step 1/1. Functionally, catalyzes the acyloin condensation reaction between C atoms 2 and 3 of pyruvate and glyceraldehyde 3-phosphate to yield 1-deoxy-D-xylulose-5-phosphate (DXP). This chain is 1-deoxy-D-xylulose-5-phosphate synthase, found in Prochlorococcus marinus (strain MIT 9215).